The following is a 376-amino-acid chain: 12-oxophytodienoate reductase 1 (376 aa).

FMN-binding positions include 35-37 (PLT), Ala-68, and Gln-110. Substrate-binding positions include Ser-143 and 187-190 (HGAH). The Proton donor role is filled by Tyr-192. Arg-239 lines the FMN pocket. Arg-279 serves as a coordination point for substrate. Residues Gly-309 and 330 to 331 (GR) each bind FMN.

This sequence belongs to the NADH:flavin oxidoreductase/NADH oxidase family. The cofactor is FMN. Constitutively expressed in roots, leaves, cotyledons, cells culture and to a lower extent in flowers.

The protein resides in the cytoplasm. It carries out the reaction (1S,2S)-OPC-8 + NADP(+) = (9S,13S,15Z)-12-oxophyto-10,15-dienoate + NADPH + H(+). It participates in lipid metabolism; oxylipin biosynthesis. In terms of biological role, specifically cleaves olefinic bonds in alpha,beta-unsaturated carbonyls and may be involved in detoxification or modification of these reactive compounds. May be involved in the biosynthesis or metabolism of oxylipin signaling molecules. In vitro, reduces 9R,13R-12-oxophyodienoic acid (9R,13R-OPDA) to 9R,13R-OPC-8:0, but not 9S,13S-OPDA, the natural precursor of jasmonic acid. Also reduces N-ethylmaleimide and maleic acid. This chain is 12-oxophytodienoate reductase 1 (OPR1), found in Solanum lycopersicum (Tomato).